The chain runs to 901 residues: Protein translocase subunit SecA (901 aa).

Residues glutamine 87, 105–109, and aspartate 512 contribute to the ATP site; that span reads GEGKT. Zn(2+)-binding residues include cysteine 885, cysteine 887, cysteine 896, and histidine 897.

It belongs to the SecA family. As to quaternary structure, monomer and homodimer. Part of the essential Sec protein translocation apparatus which comprises SecA, SecYEG and auxiliary proteins SecDF-YajC and YidC. Zn(2+) is required as a cofactor.

Its subcellular location is the cell inner membrane. The protein localises to the cytoplasm. It carries out the reaction ATP + H2O + cellular proteinSide 1 = ADP + phosphate + cellular proteinSide 2.. Functionally, part of the Sec protein translocase complex. Interacts with the SecYEG preprotein conducting channel. Has a central role in coupling the hydrolysis of ATP to the transfer of proteins into and across the cell membrane, serving both as a receptor for the preprotein-SecB complex and as an ATP-driven molecular motor driving the stepwise translocation of polypeptide chains across the membrane. The chain is Protein translocase subunit SecA from Salmonella paratyphi B (strain ATCC BAA-1250 / SPB7).